Here is a 780-residue protein sequence, read N- to C-terminus: Cation channel sperm-associated protein 1 (780 aa).

3 disordered regions span residues 1-37, 71-306, and 376-412; these read MDQN…PGHS, LSSH…QDHH, and QMSK…LQRT. The Cytoplasmic segment spans residues 1–447; it reads MDQNSVPEKA…EMIRNLTQSL (447 aa). Residues 110–122 show a composition bias toward basic and acidic residues; that stretch reads SYGEDYHDELQRD. The segment covering 211-241 has biased composition (basic residues); the sequence is QVPHRGWPHHHQVHHHGRSRHHEAHQHGKSP. The span at 261 to 284 shows a compositional bias: basic and acidic residues; the sequence is SDYHSEYHQGDHHPSEYHHGDHPH. Over residues 285 to 299 the composition is skewed to basic residues; that stretch reads HTQHHYHQTHRHRDY. Basic and acidic residues predominate over residues 387–401; sequence STKHSEDWGKEEGQF. A compositionally biased stretch (basic residues) spans 402–412; that stretch reads QKRKTGRLQRT. Residues 448–469 traverse the membrane as a helical segment; the sequence is AFETFIFFVVCLNTVMLVAQTF. Topologically, residues 470 to 478 are extracellular; the sequence is AEVEIRGEW. A helical transmembrane segment spans residues 479–500; that stretch reads YFMALDSIFFCIYVVEALLKII. Residues 501-508 lie on the Cytoplasmic side of the membrane; it reads ALGLSYFF. Residues 509-531 form a helical membrane-spanning segment; the sequence is DFWNNLDFFIMAMAVLDFLLMQT. Topologically, residues 532–540 are extracellular; it reads HSFAIYHQS. A helical membrane pass occupies residues 541–563; it reads LFRILKVFKSLRALRAIRVLRRL. Residues 564–581 are Cytoplasmic-facing; that stretch reads SFLTSVQEVTGTLGQSLP. The helical transmembrane segment at 582-604 threads the bilayer; the sequence is SIAAILILMFTCLFLFSAVLRAL. The Extracellular portion of the chain corresponds to 605-615; it reads FRKSDPKRFQN. Residues 616 to 628 constitute an intramembrane region (helical; Pore-forming); the sequence is IFTTIFTLFTLLT. At 629–645 the chain is on the extracellular side; the sequence is LDDWSLIYMDSRAQGAW. The chain crosses the membrane as a helical span at residues 646–671; the sequence is YIIPILVIYIIIQYFIFLNLVITVLV. At 672-780 the chain is on the cytoplasmic side; that stretch reads DSFQTALFKG…FEAGEEDFRN (109 aa).

This sequence belongs to the cation channel sperm-associated (TC 1.A.1.19) family. In terms of assembly, component of the CatSper complex or CatSpermasome composed of the core pore-forming members CATSPER1, CATSPER2, CATSPER3 and CATSPER4 as well as auxiliary members CATSPERB, CATSPERG, CATSPERD, CATSPERE, CATSPERZ, C2CD6/CATSPERT, TMEM249, TMEM262 and EFCAB9. HSPA1 may be an additional auxiliary complex member. The core complex members CATSPER1, CATSPER2, CATSPER3 and CATSPER4 form a heterotetrameric channel. The auxiliary CATSPERB, CATSPERG, CATSPERD and CATSPERE subunits form a pavilion-like structure over the pore which stabilizes the complex through interactions with CATSPER4, CATSPER3, CATSPER1 and CATSPER2 respectively. TMEM262/CATSPERH interacts with CATSPERB, further stabilizing the complex. C2CD6/CATSPERT interacts at least with CATSPERD and is required for targeting the CatSper complex in the flagellar membrane. Interacts with Ca(v)3.3/CACNA1I, leading to suppression of T-type calcium channel activity. In terms of tissue distribution, testis-specific.

The protein localises to the cell projection. It localises to the cilium. It is found in the flagellum membrane. It catalyses the reaction Ca(2+)(in) = Ca(2+)(out). Its activity is regulated as follows. The CatSper calcium channel is indirectly activated by extracellular progesterone and prostaglandins following the sequence: progesterone &gt; PGF1-alpha = PGE1 &gt; PGA1 &gt; PGE2 &gt;&gt; PGD2. The CatSper calcium channel is directly inhibited by endocannabinoid 2-arachidonoylglycerol (2AG). Indirect activation by progesterone takes place via the following mechanism: progesterone binds and activates the acylglycerol lipase ABHD2, which in turn mediates hydrolysis of 2AG inhibitor, relieving inhibition of the CatSper channel. The primary effect of progesterone activation is to shift voltage dependence towards more physiological, negative membrane potentials; it is not mediated by metabotropic receptors and second messengers. Sperm capacitation enhances the effect of progesterone by providing additional negative shift. Also activated by the elevation of intracellular pH. Its function is as follows. Pore-forming subunit of the CatSper complex, a sperm-specific voltage-gated calcium channel that plays a central role in calcium-dependent physiological responses essential for successful fertilization, such as sperm hyperactivation, acrosome reaction and chemotaxis towards the oocyte. In Homo sapiens (Human), this protein is Cation channel sperm-associated protein 1 (CATSPER1).